Consider the following 387-residue polypeptide: Succinate--CoA ligase [ADP-forming] subunit beta (387 aa).

Residues 9–245 form the ATP-grasp domain; it reads KDLLESYGLK…KSQENAKELK (237 aa). Residues Lys-46, 53-55, Glu-100, Tyr-103, and Glu-108 each bind ATP; that span reads GRG. Residues Asn-200 and Asp-214 each contribute to the Mg(2+) site. Residues Asn-265 and 322 to 324 contribute to the substrate site; that span reads GIV.

This sequence belongs to the succinate/malate CoA ligase beta subunit family. In terms of assembly, heterotetramer of two alpha and two beta subunits. Requires Mg(2+) as cofactor.

The enzyme catalyses succinate + ATP + CoA = succinyl-CoA + ADP + phosphate. It carries out the reaction GTP + succinate + CoA = succinyl-CoA + GDP + phosphate. It participates in carbohydrate metabolism; tricarboxylic acid cycle; succinate from succinyl-CoA (ligase route): step 1/1. Functionally, succinyl-CoA synthetase functions in the citric acid cycle (TCA), coupling the hydrolysis of succinyl-CoA to the synthesis of either ATP or GTP and thus represents the only step of substrate-level phosphorylation in the TCA. The beta subunit provides nucleotide specificity of the enzyme and binds the substrate succinate, while the binding sites for coenzyme A and phosphate are found in the alpha subunit. This chain is Succinate--CoA ligase [ADP-forming] subunit beta, found in Francisella tularensis subsp. mediasiatica (strain FSC147).